We begin with the raw amino-acid sequence, 435 residues long: Eukaryotic translation initiation factor 3 subunit E (435 aa).

The region spanning 241 to 409 (TDMFFSPSYI…GTVIMNHPPQ (169 aa)) is the PCI domain.

This sequence belongs to the eIF-3 subunit E family. In terms of assembly, component of the eukaryotic translation initiation factor 3 (eIF-3) complex.

The protein localises to the cytoplasm. Component of the eukaryotic translation initiation factor 3 (eIF-3) complex, which is involved in protein synthesis of a specialized repertoire of mRNAs and, together with other initiation factors, stimulates binding of mRNA and methionyl-tRNAi to the 40S ribosome. The eIF-3 complex specifically targets and initiates translation of a subset of mRNAs involved in cell proliferation. This is Eukaryotic translation initiation factor 3 subunit E from Phaeosphaeria nodorum (strain SN15 / ATCC MYA-4574 / FGSC 10173) (Glume blotch fungus).